We begin with the raw amino-acid sequence, 183 residues long: Ribosome-recycling factor (183 aa).

It belongs to the RRF family.

Its subcellular location is the cytoplasm. Functionally, responsible for the release of ribosomes from messenger RNA at the termination of protein biosynthesis. May increase the efficiency of translation by recycling ribosomes from one round of translation to another. The chain is Ribosome-recycling factor from Clostridium tetani (strain Massachusetts / E88).